A 94-amino-acid polypeptide reads, in one-letter code: Selenoprotein K (94 aa).

A helical transmembrane segment spans residues 20 to 42 (VSFLTDFFWGIAEFVVFFFKTLL). Residues 46-94 (VKKRRGYGSSSDSRYDDGRGPPGNPPRRMGRISHLRGPSPPPMAGGUGR) are disordered. Residue Sec-92 is a non-standard amino acid, selenocysteine.

Belongs to the selenoprotein K family. In terms of assembly, interacts with DERL1, DERL2, DERL3 and SELENOS. The SELENOK-SELENOS complex interacts with VCP. Interacts with ZDHHC6. In terms of processing, cleaved by CAPN2/m-calpain in resting macrophages but not in activated macrophages. Macrophage activation up-regulates expression of the calpain inhibitor CAST/calpastatin, resulting in inhibition of CAPN2 activity. Truncated SELENOK proteins produced by failed UGA/Sec decoding are ubiquitinated by the CRL2(KLHDC2) complex, which recognizes the diglycine (Gly-Gly) at the C-terminus of truncated SELENOK proteins. As to expression, high expression in spleen and intestine (at protein level). Expressed in a range of immune cells including T and B-cells and also in myeloid cells including macrophages, neutrophils and dendritic cells (at protein level).

It is found in the endoplasmic reticulum membrane. Its subcellular location is the cell membrane. In terms of biological role, required for Ca(2+) flux in immune cells and plays a role in T-cell proliferation and in T-cell and neutrophil migration. Involved in endoplasmic reticulum-associated degradation (ERAD) of soluble glycosylated proteins. Required for palmitoylation and cell surface expression of CD36 and involved in macrophage uptake of low-density lipoprotein and in foam cell formation. Together with ZDHHC6, required for palmitoylation of ITPR1 in immune cells, leading to regulate ITPR1 stability and function. Plays a role in protection of cells from ER stress-induced apoptosis. Protects cells from oxidative stress when overexpressed in cardiomyocytes. The polypeptide is Selenoprotein K (Mus musculus (Mouse)).